A 457-amino-acid chain; its full sequence is tRNA-2-methylthio-N(6)-dimethylallyladenosine synthase (457 aa).

Positions 3–120 (KKVYVKTFGC…LPQMIDQRRA (118 aa)) constitute an MTTase N-terminal domain. Cys12, Cys49, Cys83, Cys157, Cys161, and Cys164 together coordinate [4Fe-4S] cluster. One can recognise a Radical SAM core domain in the interval 143–377 (RVEGPSAFVS…QATIEENVAR (235 aa)). A TRAM domain is found at 380 to 447 (RSMVGKVERI…PHSLRGELLL (68 aa)).

It belongs to the methylthiotransferase family. MiaB subfamily. Monomer. Requires [4Fe-4S] cluster as cofactor.

It is found in the cytoplasm. It carries out the reaction N(6)-dimethylallyladenosine(37) in tRNA + (sulfur carrier)-SH + AH2 + 2 S-adenosyl-L-methionine = 2-methylsulfanyl-N(6)-dimethylallyladenosine(37) in tRNA + (sulfur carrier)-H + 5'-deoxyadenosine + L-methionine + A + S-adenosyl-L-homocysteine + 2 H(+). Functionally, catalyzes the methylthiolation of N6-(dimethylallyl)adenosine (i(6)A), leading to the formation of 2-methylthio-N6-(dimethylallyl)adenosine (ms(2)i(6)A) at position 37 in tRNAs that read codons beginning with uridine. The sequence is that of tRNA-2-methylthio-N(6)-dimethylallyladenosine synthase from Burkholderia ambifaria (strain ATCC BAA-244 / DSM 16087 / CCUG 44356 / LMG 19182 / AMMD) (Burkholderia cepacia (strain AMMD)).